The following is a 193-amino-acid chain: UPF0397 protein PA0141 (193 aa).

Transmembrane regions (helical) follow at residues 11–31, 43–63, 69–89, 109–129, and 147–167; these read VTIA…SIPI, FLVF…GLLG, FFLF…LGFL, ILFF…LIAP, and GFLV…FLMS.

The protein belongs to the UPF0397 family.

The protein localises to the cell membrane. This Phytoplasma australiense protein is UPF0397 protein PA0141.